The following is a 658-amino-acid chain: Secretin XcpQ (658 aa).

An N-terminal signal peptide occupies residues 1-34 (MSQPLLRALFAPSSRSYVPAVLLSLALGIQAAHA). The segment at 51–141 (AHWTINLKDA…TEAGGGQSAP (91 aa)) is N0. Residues 142-205 (DRLETRVIQV…DVIRQLDQKG (64 aa)) are N1. The interval 206–279 (SHDYSVINLR…SLDTPTARSA (74 aa)) is N2. An N3 region spans residues 280 to 365 (NTRVIRLRHN…VPRAQVLVEA (86 aa)). Residues 302-322 (SEGMKNNGGQGGEQTGGGRPS) are disordered. Gly residues predominate over residues 307-320 (NNGGQGGEQTGGGR). Residues 368–606 (VEISGDIQDA…VFLRPTVVRD (239 aa)) form a secretin region. The interval 608–658 (AGLAALSGKKYSDIRVIDGTRGPEGRPSILPTNANQLFDGQAVDLRELMTE) is s domain.

This sequence belongs to the bacterial secretin family. GSP D subfamily. Forms a cylindrical channel with 15 subunits. The closed pentadecameric channel is 170 Angstroms long and 140 Angstroms in diameter.

It is found in the cell outer membrane. Involved in a type II secretion system (T2SS, formerly general secretion pathway, GSP) for the export of proteins. This subunit forms the outer membrane channel. Among its substrates are PrpL, elastase LasB, chitin binding protein D (CbpD), aminopeptidase PaAP, and metalloprotease ImpA. In Pseudomonas aeruginosa (strain ATCC 15692 / DSM 22644 / CIP 104116 / JCM 14847 / LMG 12228 / 1C / PRS 101 / PAO1), this protein is Secretin XcpQ.